A 257-amino-acid polypeptide reads, in one-letter code: Aspartate/glutamate leucyltransferase (257 aa).

Belongs to the R-transferase family. Bpt subfamily.

The protein resides in the cytoplasm. The catalysed reaction is N-terminal L-glutamyl-[protein] + L-leucyl-tRNA(Leu) = N-terminal L-leucyl-L-glutamyl-[protein] + tRNA(Leu) + H(+). It catalyses the reaction N-terminal L-aspartyl-[protein] + L-leucyl-tRNA(Leu) = N-terminal L-leucyl-L-aspartyl-[protein] + tRNA(Leu) + H(+). In terms of biological role, functions in the N-end rule pathway of protein degradation where it conjugates Leu from its aminoacyl-tRNA to the N-termini of proteins containing an N-terminal aspartate or glutamate. The protein is Aspartate/glutamate leucyltransferase of Nitrobacter winogradskyi (strain ATCC 25391 / DSM 10237 / CIP 104748 / NCIMB 11846 / Nb-255).